The sequence spans 157 residues: uncharacterized protein (157 aa).

The N-acetyltransferase domain maps to 9-147 (LLINYKTLDE…DFYVWHPEVN (139 aa)).

This is an uncharacterized protein from Bacillus cereus (strain 03BB102).